A 443-amino-acid polypeptide reads, in one-letter code: MDYTPQNQKDKKKMLETIGIDDVSELFDTIPKDLRAKKLNISGGKTEQELLNYFSDIASENKVLISFRGAGIYDHYIPSLVGEVIGRSEFWTAYTPYQAEASQGTLQSIFEYQSLICALTGLDTSNASLYDGATATAEAVLLALRASGKNKILISQGLHPEYMQTVKTYLENSKAEIVTLNISENGVIEKDAVDASVDDDTAAVIIQSPNFFGVVEDMQALSTVIKSRNSLFVAVLNPLSLGVFMSPGEYKADIAVGEGQVLGSAMRAGGATFGFMAVKKALEWKMPGRIAGQTTDKNGNRGFVLTLQSREQHIRREKATSNICTSASLNALAGCVFLSGWGNDGFKNLAEINISKARYAFNKIKSLKGFKSKFENKVFFNEFVIETSKNIKKIQNILLKNGILGPLDLSCINENFKNCLLFCVTEQRTKAEINRLTEILAEA.

The protein belongs to the GcvP family. N-terminal subunit subfamily. The glycine cleavage system is composed of four proteins: P, T, L and H. In this organism, the P 'protein' is a heterodimer of two subunits.

It catalyses the reaction N(6)-[(R)-lipoyl]-L-lysyl-[glycine-cleavage complex H protein] + glycine + H(+) = N(6)-[(R)-S(8)-aminomethyldihydrolipoyl]-L-lysyl-[glycine-cleavage complex H protein] + CO2. In terms of biological role, the glycine cleavage system catalyzes the degradation of glycine. The P protein binds the alpha-amino group of glycine through its pyridoxal phosphate cofactor; CO(2) is released and the remaining methylamine moiety is then transferred to the lipoamide cofactor of the H protein. This chain is Probable glycine dehydrogenase (decarboxylating) subunit 1, found in Endomicrobium trichonymphae.